A 494-amino-acid polypeptide reads, in one-letter code: MLPKRRRARVGSPSGDAASSTPPSTRFPGVAIYLVEPRMGRSRRAFLTGLARSKGFRVLDACSSEATHVVMEETSAEEAVSWQERRMAAAPPGCTPPALLDISWLTESLGAGQPVPVECRHRLEVAGPRKGPLSPAWMPAYACQRPTPLTHHNTGLSEALEILAEAAGFEGSEGRLLTFCRAASVLKALPSPVTTLSQLQGLPHFGEHSSRVVQELLEHGVCEEVERVRRSERYQTMKLFTQIFGVGVKTADRWYREGLRTLDDLREQPQKLTQQQKAGLQHHQDLSTPVLRSDVDALQQVVEEAVGQALPGATVTLTGGFRRGKLQGHDVDFLITHPKEGQEAGLLPRVMCRLQDQGLILYHQHQHSCCESPTRLAQQSHMDAFERSFCIFRLPQPPGAAVGGSTRPCPSWKAVRVDLVVAPVSQFPFALLGWTGSKLFQRELRRFSRKEKGLWLNSHGLFDPEQKTFFQAASEEDIFRHLGLEYLPPEQRNA.

Positions 1–24 are disordered; sequence MLPKRRRARVGSPSGDAASSTPPS. The residue at position 12 (Ser-12) is a Phosphoserine. A BRCT domain is found at 22 to 122; that stretch reads PPSTRFPGVA…QPVPVECRHR (101 aa). Residues 323-332 are involved in ssDNA binding; that stretch reads RGKLQGHDVD. Mg(2+)-binding residues include Asp-330, Asp-332, and Asp-418.

The protein belongs to the DNA polymerase type-X family. It depends on Mg(2+) as a cofactor. As to expression, expressed in a number of tissues. Abundant in thymus.

Its subcellular location is the nucleus. It carries out the reaction DNA(n) + a 2'-deoxyribonucleoside 5'-triphosphate = DNA(n+1) + diphosphate. Its function is as follows. Gap-filling polymerase involved in repair of DNA double-strand breaks by non-homologous end joining (NHEJ). Participates in immunoglobulin (Ig) light chain gene rearrangement in V(D)J recombination. This chain is DNA-directed DNA/RNA polymerase mu (POLM), found in Homo sapiens (Human).